A 160-amino-acid polypeptide reads, in one-letter code: Protein-export protein SecB (160 aa).

This sequence belongs to the SecB family. As to quaternary structure, homotetramer, a dimer of dimers. One homotetramer interacts with 1 SecA dimer.

Its subcellular location is the cytoplasm. Its function is as follows. One of the proteins required for the normal export of preproteins out of the cell cytoplasm. It is a molecular chaperone that binds to a subset of precursor proteins, maintaining them in a translocation-competent state. It also specifically binds to its receptor SecA. This is Protein-export protein SecB from Beijerinckia indica subsp. indica (strain ATCC 9039 / DSM 1715 / NCIMB 8712).